Here is a 485-residue protein sequence, read N- to C-terminus: Glutamyl-tRNA(Gln) amidotransferase subunit A 1 (485 aa).

Catalysis depends on charge relay system residues Lys79 and Ser154. The active-site Acyl-ester intermediate is Ser178.

The protein belongs to the amidase family. GatA subfamily. Heterotrimer of A, B and C subunits.

The enzyme catalyses L-glutamyl-tRNA(Gln) + L-glutamine + ATP + H2O = L-glutaminyl-tRNA(Gln) + L-glutamate + ADP + phosphate + H(+). Its function is as follows. Allows the formation of correctly charged Gln-tRNA(Gln) through the transamidation of misacylated Glu-tRNA(Gln) in organisms which lack glutaminyl-tRNA synthetase. The reaction takes place in the presence of glutamine and ATP through an activated gamma-phospho-Glu-tRNA(Gln). The sequence is that of Glutamyl-tRNA(Gln) amidotransferase subunit A 1 (gatA1) from Clostridium acetobutylicum (strain ATCC 824 / DSM 792 / JCM 1419 / IAM 19013 / LMG 5710 / NBRC 13948 / NRRL B-527 / VKM B-1787 / 2291 / W).